A 147-amino-acid chain; its full sequence is uncharacterized protein (147 aa).

2 consecutive 4Fe-4S ferredoxin-type domains span residues 80 to 109 (WYPKIDYNRCKNCEKCISFCPRGVYDAENG) and 110 to 141 (KVVVKYPYSCIVNCNACSIMCCENNAIIFPDE). [4Fe-4S] cluster is bound by residues Cys89, Cys92, Cys95, Cys99, Cys119, Cys123, Cys126, and Cys130.

It depends on [4Fe-4S] cluster as a cofactor.

This is an uncharacterized protein from Methanocaldococcus jannaschii (strain ATCC 43067 / DSM 2661 / JAL-1 / JCM 10045 / NBRC 100440) (Methanococcus jannaschii).